An 84-amino-acid chain; its full sequence is Anaphase-promoting complex subunit 11 (84 aa).

Residues C23, C26, C34, C37, C44, C51, H53, H56, H58, C59, C73, and C76 each coordinate Zn(2+). An RING-type zinc finger spans residues 34–77 (CPDCKVPGDDCPLVWGQCSHCFHMHCILKWLHAQQVQQHCPMCR).

It belongs to the RING-box family. In terms of assembly, the mammalian APC/C is composed at least of 14 distinct subunits ANAPC1, ANAPC2, CDC27/APC3, ANAPC4, ANAPC5, CDC16/APC6, ANAPC7, CDC23/APC8, ANAPC10, ANAPC11, CDC26/APC12, ANAPC13, ANAPC15 and ANAPC16 that assemble into a complex of at least 19 chains with a combined molecular mass of around 1.2 MDa; APC/C interacts with FZR1 and FBXO5. Interacts with the cullin domain of ANAPC2. Interacts with UBE2D2. Auto-ubiquitinated. Expressed at high levels in skeletal muscle and heart; in moderate levels in brain, kidney, and liver; and at low levels in colon, thymus, spleen, small intestine, placenta, lung and peripheral blood leukocyte.

The protein resides in the cytoplasm. It localises to the nucleus. It participates in protein modification; protein ubiquitination. Its function is as follows. Together with the cullin protein ANAPC2, constitutes the catalytic component of the anaphase promoting complex/cyclosome (APC/C), a cell cycle-regulated E3 ubiquitin ligase that controls progression through mitosis and the G1 phase of the cell cycle. The APC/C complex acts by mediating ubiquitination and subsequent degradation of target proteins: it mainly mediates the formation of 'Lys-11'-linked polyubiquitin chains and, to a lower extent, the formation of 'Lys-48'- and 'Lys-63'-linked polyubiquitin chains. The APC/C complex catalyzes assembly of branched 'Lys-11'-/'Lys-48'-linked branched ubiquitin chains on target proteins. May recruit the E2 ubiquitin-conjugating enzymes to the complex. The protein is Anaphase-promoting complex subunit 11 (ANAPC11) of Homo sapiens (Human).